We begin with the raw amino-acid sequence, 90 residues long: MKKAVINGEQIRSISDLHQTLKKELALPEYYGENLDALWDCLTGWVEYPLVLEWRQFEQSKQLTENGAESVLQVFREAKAEGCDITIILS.

This sequence belongs to the barstar family.

It localises to the cytoplasm. Its function is as follows. Inhibitor of the ribonuclease barnase. Forms a one-to-one non-covalent complex. The sequence is that of Barstar from Bacillus amyloliquefaciens (Bacillus velezensis).